A 76-amino-acid chain; its full sequence is Conotoxin ArMKLT2-032 (76 aa).

Residues methionine 1 to glycine 22 form the signal peptide. The propeptide occupies glutamate 23–arginine 46. At glutamine 47 the chain carries Pyrrolidone carboxylic acid. 3 disulfides stabilise this stretch: cysteine 48–cysteine 62, cysteine 55–cysteine 66, and cysteine 61–cysteine 73.

This sequence belongs to the conotoxin O1 superfamily. As to expression, expressed by the venom duct.

It is found in the secreted. This chain is Conotoxin ArMKLT2-032, found in Conus arenatus (Sand-dusted cone).